The chain runs to 629 residues: Aspartate--tRNA(Asp/Asn) ligase (629 aa).

The segment at 1 to 24 (MERSSRADLISEDSHPARTHTCGD) is disordered. Residues 12 to 24 (EDSHPARTHTCGD) are compositionally biased toward basic and acidic residues. Glutamate 194 contributes to the L-aspartate binding site. The segment at 218 to 221 (QTYK) is aspartate. Arginine 240 provides a ligand contact to L-aspartate. ATP-binding positions include 240–242 (RDE) and glutamine 249. Residue histidine 474 coordinates L-aspartate. Glutamate 508 is an ATP binding site. Arginine 515 is an L-aspartate binding site. Residue 560–563 (GLDR) participates in ATP binding.

This sequence belongs to the class-II aminoacyl-tRNA synthetase family. Type 1 subfamily. Homodimer.

The protein localises to the cytoplasm. The catalysed reaction is tRNA(Asx) + L-aspartate + ATP = L-aspartyl-tRNA(Asx) + AMP + diphosphate. Aspartyl-tRNA synthetase with relaxed tRNA specificity since it is able to aspartylate not only its cognate tRNA(Asp) but also tRNA(Asn). Reaction proceeds in two steps: L-aspartate is first activated by ATP to form Asp-AMP and then transferred to the acceptor end of tRNA(Asp/Asn). The sequence is that of Aspartate--tRNA(Asp/Asn) ligase from Salinibacter ruber (strain DSM 13855 / M31).